Consider the following 143-residue polypeptide: uncharacterized protein (143 aa).

The active site involves C12.

Belongs to the ArsC family.

This is an uncharacterized protein from Rhodospirillum rubrum.